Consider the following 277-residue polypeptide: Energy-coupling factor transporter ATP-binding protein EcfA1 (277 aa).

The region spanning 4-238 (IETKNLNYSY…SELLSKNDLK (235 aa)) is the ABC transporter domain. Position 38-45 (38-45 (GKNGSGKS)) interacts with ATP.

Belongs to the ABC transporter superfamily. Energy-coupling factor EcfA family. In terms of assembly, forms a stable energy-coupling factor (ECF) transporter complex composed of 2 membrane-embedded substrate-binding proteins (S component), 2 ATP-binding proteins (A component) and 2 transmembrane proteins (T component).

It localises to the cell membrane. ATP-binding (A) component of a common energy-coupling factor (ECF) ABC-transporter complex. Unlike classic ABC transporters this ECF transporter provides the energy necessary to transport a number of different substrates. This Oenococcus oeni (strain ATCC BAA-331 / PSU-1) protein is Energy-coupling factor transporter ATP-binding protein EcfA1.